The primary structure comprises 183 residues: Translation initiation factor IF-3 (183 aa).

The protein belongs to the IF-3 family. In terms of assembly, monomer.

The protein localises to the cytoplasm. In terms of biological role, IF-3 binds to the 30S ribosomal subunit and shifts the equilibrium between 70S ribosomes and their 50S and 30S subunits in favor of the free subunits, thus enhancing the availability of 30S subunits on which protein synthesis initiation begins. The chain is Translation initiation factor IF-3 from Pseudomonas fluorescens (strain SBW25).